The primary structure comprises 86 residues: Putative pro-MCH-like protein 2 (86 aa).

Positions 31–49 (GSVAFPAENGVQDTESTLE) are NGE-like. Positions 40–60 (GVQDTESTLEKRETGDEENSA) are disordered. The tract at residues 52–64 (ETGDEENSAKFPI) is NEI-like. Residues 68–86 (DFDTLRCMLGRVYQRCWQV) form a melanin-concentrating hormone-like region.

This sequence belongs to the melanin-concentrating hormone family. Expressed in testis but not in brain.

In Homo sapiens (Human), this protein is Putative pro-MCH-like protein 2 (PMCHL2).